A 122-amino-acid polypeptide reads, in one-letter code: Large ribosomal subunit protein uL14 (122 aa).

Belongs to the universal ribosomal protein uL14 family. As to quaternary structure, part of the 50S ribosomal subunit. Forms a cluster with proteins L3 and L19. In the 70S ribosome, L14 and L19 interact and together make contacts with the 16S rRNA in bridges B5 and B8.

Binds to 23S rRNA. Forms part of two intersubunit bridges in the 70S ribosome. This chain is Large ribosomal subunit protein uL14, found in Acidothermus cellulolyticus (strain ATCC 43068 / DSM 8971 / 11B).